A 166-amino-acid polypeptide reads, in one-letter code: UPF0134 protein MPN_138 (166 aa).

Belongs to the UPF0134 family.

The protein is UPF0134 protein MPN_138 of Mycoplasma pneumoniae (strain ATCC 29342 / M129 / Subtype 1) (Mycoplasmoides pneumoniae).